A 347-amino-acid chain; its full sequence is Doublecortin domain-containing protein 2C (347 aa).

Doublecortin domains lie at 16 to 98 and 136 to 217; these read KTIL…LDYI and RYIN…IPYW. Positions 235–260 are disordered; sequence KYTQTKKRVESKVKEPLQNDSVPPRS. Over residues 241-251 the composition is skewed to basic and acidic residues; sequence KRVESKVKEPL.

It localises to the cell projection. The protein localises to the cilium. It is found in the flagellum. Its subcellular location is the cytoplasm. This chain is Doublecortin domain-containing protein 2C, found in Mus musculus (Mouse).